A 124-amino-acid chain; its full sequence is Small ribosomal subunit protein uS12 (124 aa).

Residues 1 to 25 (MPTFNQLVRNGRKPPRWKTSSPALE) form a disordered region. D89 bears the 3-methylthioaspartic acid mark. Residues 104–124 (TAGVANRKQSRSKYGAKRPKS) form a disordered region. The span at 111–124 (KQSRSKYGAKRPKS) shows a compositional bias: basic residues.

The protein belongs to the universal ribosomal protein uS12 family. Part of the 30S ribosomal subunit. Contacts proteins S8 and S17. May interact with IF1 in the 30S initiation complex.

In terms of biological role, with S4 and S5 plays an important role in translational accuracy. Interacts with and stabilizes bases of the 16S rRNA that are involved in tRNA selection in the A site and with the mRNA backbone. Located at the interface of the 30S and 50S subunits, it traverses the body of the 30S subunit contacting proteins on the other side and probably holding the rRNA structure together. The combined cluster of proteins S8, S12 and S17 appears to hold together the shoulder and platform of the 30S subunit. The protein is Small ribosomal subunit protein uS12 of Solibacter usitatus (strain Ellin6076).